The sequence spans 72 residues: Translation initiation factor IF-1 (72 aa).

Residues 1–72 form the S1-like domain; that stretch reads MAKKDVIELE…TRGRITWRKK (72 aa).

It belongs to the IF-1 family. Component of the 30S ribosomal translation pre-initiation complex which assembles on the 30S ribosome in the order IF-2 and IF-3, IF-1 and N-formylmethionyl-tRNA(fMet); mRNA recruitment can occur at any time during PIC assembly.

The protein localises to the cytoplasm. Its function is as follows. One of the essential components for the initiation of protein synthesis. Stabilizes the binding of IF-2 and IF-3 on the 30S subunit to which N-formylmethionyl-tRNA(fMet) subsequently binds. Helps modulate mRNA selection, yielding the 30S pre-initiation complex (PIC). Upon addition of the 50S ribosomal subunit IF-1, IF-2 and IF-3 are released leaving the mature 70S translation initiation complex. This chain is Translation initiation factor IF-1, found in Clostridioides difficile (strain 630) (Peptoclostridium difficile).